Here is a 405-residue protein sequence, read N- to C-terminus: Scramblase ANY1 (405 aa).

Residues 1–51 (MSTTGPLDATLIRDVAVATATKASYDMSDTLYSYLPKVDQFYIPEWLTMQF) lie on the Cytoplasmic side of the membrane. A helical membrane pass occupies residues 52 to 72 (IANNLISFTPLFSYGTTIISI). The Lumenal portion of the chain corresponds to 73–76 (EKCK). A helical transmembrane segment spans residues 77–97 (TALGFSIDICATMLIASILRI). Residues 98–103 (SYYLIT) lie on the Cytoplasmic side of the membrane. A helical transmembrane segment spans residues 104–124 (PYEITLLRQSLVMIFIQLILL). Topologically, residues 125-177 (RTSLKYRPDEYKYQNLTDVESLSHLIHDIWFEFFSCINRPKFLSEDWKNLIKS) are lumenal. The chain crosses the membrane as a helical span at residues 178–198 (LSFTNLLKFSFKIFLAFFYKI). At 199–223 (LKFFDPNFKRIGAFWQWDDDKNFWR) the chain is on the cytoplasmic side. A helical membrane pass occupies residues 224–244 (FLALFATVQILVTFFISNILN). Residues 245 to 254 (WDSLAQGLGS) are Lumenal-facing. The 58-residue stretch at 252-309 (LGSIIGSLGLLVESLLPLPQIAILYKLKSVQGFKLILLVSWLCGDTLKITYLIFGAKN) folds into the PQ-loop domain. A helical membrane pass occupies residues 255-275 (IIGSLGLLVESLLPLPQIAIL). Residues 276-283 (YKLKSVQG) lie on the Cytoplasmic side of the membrane. A helical membrane pass occupies residues 284 to 306 (FKLILLVSWLCGDTLKITYLIFG). At 307–312 (AKNISA) the chain is on the lumenal side. A helical transmembrane segment spans residues 313–335 (LFVIFALFQMSLDFYIGGQYIYY). Over 336–405 (RYYYPKLRHQ…GKSQAQAVTL (70 aa)) the chain is Cytoplasmic. The segment at 379-405 (LKQDSNDTSDSPQDDQVGKSQAQAVTL) is disordered. Residues 396–405 (GKSQAQAVTL) are compositionally biased toward polar residues.

As to quaternary structure, interacts with NEO1.

The protein localises to the golgi apparatus membrane. It is found in the late endosome membrane. Functionally, phospholipid scramblase that transports phosphatidylserine (PS) and phosphatidylethalonamine (PE) bidirectionally from one leaflet to the other of the phospholipid bilayer to at least partially collapse the membrane asymmetry established by NEO1 and other flippases. The PS scramblase activity has been disputed. Functions in the trafficking pathway from endosomes to the trans-Golgi network (TGN). The protein is Scramblase ANY1 of Saccharomyces cerevisiae (strain ATCC 204508 / S288c) (Baker's yeast).